A 145-amino-acid chain; its full sequence is MKFFCKLESGSSLPEYATSGASGADVRANINEPIAILPGQRALIPTGISVEIPHGYEIQVRSRSGLASKYGVIVLQSPGTVDADYRGEIRVILANLGEATFIVEPGMRIAQLVVAKVEQVSFVETQEELTATARGTGGFGHTGEC.

Residues 63–65 (RSG), Gln76, and 80–82 (TVD) each bind substrate.

The protein belongs to the dUTPase family. Mg(2+) serves as cofactor.

It carries out the reaction dUTP + H2O = dUMP + diphosphate + H(+). It participates in pyrimidine metabolism; dUMP biosynthesis; dUMP from dCTP (dUTP route): step 2/2. This enzyme is involved in nucleotide metabolism: it produces dUMP, the immediate precursor of thymidine nucleotides and it decreases the intracellular concentration of dUTP so that uracil cannot be incorporated into DNA. The sequence is that of Deoxyuridine 5'-triphosphate nucleotidohydrolase from Chlamydia trachomatis serovar L2 (strain ATCC VR-902B / DSM 19102 / 434/Bu).